Here is a 376-residue protein sequence, read N- to C-terminus: uncharacterized protein (376 aa).

Belongs to the YCR102c/YLR460c/YNL134c family.

This is an uncharacterized protein from Saccharomyces cerevisiae (strain ATCC 204508 / S288c) (Baker's yeast).